A 427-amino-acid polypeptide reads, in one-letter code: Mannosylglucosylglycerate synthase (427 aa).

Belongs to the glycosyltransferase group 1 family. The cofactor is Co(2+). Mg(2+) is required as a cofactor. Requires Mn(2+) as cofactor. Ni(2+) serves as cofactor.

It catalyses the reaction (2R)-2-O-(alpha-D-glucopyranosyl)-glycerate + GDP-alpha-D-mannose = (2R)-2-O-[alpha-D-mannopyranosyl-(1-&gt;2)-alpha-D-glucopyranosyl]-glycerate + GDP + H(+). Functionally, catalyzes the synthesis of mannosylglucosylglycerate (MGG) from glucosylglycerate (GG) and GDP-mannose. The chain is Mannosylglucosylglycerate synthase from Thermotoga maritima (strain ATCC 43589 / DSM 3109 / JCM 10099 / NBRC 100826 / MSB8).